The primary structure comprises 866 residues: Phospholipase D gamma 3 (866 aa).

One can recognise a C2 domain in the interval 31 to 170 (PFDTSSGSLR…CSGNRIEGLF (140 aa)). D232 contacts Ca(2+). Residues 371–406 (TIYTHHQKTMIVDAEAAQNRRKIVAFVGGLDLCNGR) enclose the PLD phosphodiesterase 1 domain. Catalysis depends on residues H376, K378, and D383. H376 is an a 1,2-diacyl-sn-glycero-3-phosphate binding site. Residues H412 and H444 each coordinate Ca(2+). Q572 contributes to the a 1,2-diacyl-sn-glycero-3-phosphate binding site. The residue at position 692 (S692) is a Phosphoserine. Positions 712 to 739 (FMIYVHSKGMVVDDEFVLIGSANINQRS) constitute a PLD phosphodiesterase 2 domain. Active-site residues include H717, K719, and D724. Residue H717 coordinates a 1,2-diacyl-sn-glycero-3-phosphate. Residue E780 coordinates Ca(2+).

It belongs to the phospholipase D family. C2-PLD subfamily. It depends on Ca(2+) as a cofactor. Highly expressed in inflorescences and old leaves, moderately in stems, roots, siliques and young leaves and low in flowers.

It is found in the cytoplasm. The protein resides in the membrane. It catalyses the reaction a 1,2-diacyl-sn-glycero-3-phosphocholine + H2O = a 1,2-diacyl-sn-glycero-3-phosphate + choline + H(+). Its activity is regulated as follows. Inhibited by neomycin. Hydrolyzes glycerol-phospholipids at the terminal phosphodiesteric bond to generate phosphatidic acids (PA). Plays an important role in various cellular processes, including phytohormone action, vesicular trafficking, secretion, cytoskeletal arrangement, meiosis, tumor promotion, pathogenesis, membrane deterioration and senescence. Can use phosphatidylserine but prefers ethanolamine-containing lipids as substrates. This is Phospholipase D gamma 3 from Arabidopsis thaliana (Mouse-ear cress).